A 326-amino-acid polypeptide reads, in one-letter code: Peroxidase 3 (326 aa).

An N-terminal signal peptide occupies residues 1 to 24 (MNCLIAIALSVSFFLVGIVGPIQA). Intrachain disulfides connect cysteine 35–cysteine 113, cysteine 68–cysteine 73, cysteine 119–cysteine 321, and cysteine 198–cysteine 231. Histidine 66 (proton acceptor) is an active-site residue. The Ca(2+) site is built by aspartate 67, valine 70, glycine 72, aspartate 74, and serine 76. N-linked (GlcNAc...) asparagine glycosylation is found at asparagine 80 and asparagine 138. Position 161 (proline 161) interacts with substrate. An N-linked (GlcNAc...) asparagine glycan is attached at asparagine 166. Histidine 191 provides a ligand contact to heme b. Threonine 192 serves as a coordination point for Ca(2+). N-linked (GlcNAc...) asparagine glycans are attached at residues asparagine 207 and asparagine 237. Positions 244, 247, and 252 each coordinate Ca(2+).

It belongs to the peroxidase family. Classical plant (class III) peroxidase subfamily. Heme b is required as a cofactor. The cofactor is Ca(2+). As to expression, expressed in root cells.

It is found in the secreted. The enzyme catalyses 2 a phenolic donor + H2O2 = 2 a phenolic radical donor + 2 H2O. Functionally, removal of H(2)O(2), oxidation of toxic reductants, biosynthesis and degradation of lignin, suberization, auxin catabolism, response to environmental stresses such as wounding, pathogen attack and oxidative stress. These functions might be dependent on each isozyme/isoform in each plant tissue. The chain is Peroxidase 3 (PER3) from Arabidopsis thaliana (Mouse-ear cress).